We begin with the raw amino-acid sequence, 354 residues long: Methylthioribose-1-phosphate isomerase (354 aa).

Substrate is bound by residues 49-51 (RGA), arginine 92, and glutamine 199. Aspartate 240 functions as the Proton donor in the catalytic mechanism. A substrate-binding site is contributed by 250-251 (NK).

This sequence belongs to the eIF-2B alpha/beta/delta subunits family. MtnA subfamily.

It carries out the reaction 5-(methylsulfanyl)-alpha-D-ribose 1-phosphate = 5-(methylsulfanyl)-D-ribulose 1-phosphate. Its pathway is amino-acid biosynthesis; L-methionine biosynthesis via salvage pathway; L-methionine from S-methyl-5-thio-alpha-D-ribose 1-phosphate: step 1/6. In terms of biological role, catalyzes the interconversion of methylthioribose-1-phosphate (MTR-1-P) into methylthioribulose-1-phosphate (MTRu-1-P). In Koribacter versatilis (strain Ellin345), this protein is Methylthioribose-1-phosphate isomerase.